The primary structure comprises 255 residues: 14-3-3 protein epsilon (255 aa).

The residue at position 1 (Met1) is an N-acetylmethionine. Residue Lys50 is modified to N6-acetyllysine; alternate. Lys50 is covalently cross-linked (Glycyl lysine isopeptide (Lys-Gly) (interchain with G-Cter in SUMO2); alternate). Ser65 is subject to Phosphoserine. Lys69, Lys118, and Lys123 each carry N6-acetyllysine. A Phosphotyrosine modification is found at Tyr131. Thr137 carries the phosphothreonine modification. Residue Ser210 is modified to Phosphoserine. Thr232 bears the Phosphothreonine mark. The interval Asp234–Gln255 is disordered.

The protein belongs to the 14-3-3 family. Homodimer. Heterodimerizes with YWHAZ. Interacts with PKA-phosphorylated AANAT. Interacts with ABL1 (phosphorylated form); the interaction retains it in the cytoplasm. Interacts with ARHGEF28. Interacts with BEX3. Weakly interacts with CDKN1B. Interacts with the 'Thr-369' phosphorylated form of DAPK2. Interacts with DENND1A. Interacts with GAB2. Interacts with phosphorylated GRB10. Interacts with KSR1. Interacts with NDEL1. Interacts with PI4KB, TBC1D22A and TBC1D22B. Interacts with the phosphorylated (by AKT1) form of SRPK2. Interacts with TIAM2. Interacts with the 'Ser-1134' and 'Ser-1161' phosphorylated form of SOS1. Interacts with ZFP36 (via phosphorylated form). Interacts with SLITRK1. Interacts with HSF1 (via phosphorylated form); this interaction promotes HSF1 sequestration in the cytoplasm in a ERK-dependent manner. Interacts with RIPOR2. Interacts with KLHL22; required for the nuclear localization of KLHL22 upon amino acid starvation. Interacts with CRTC1. Interacts with CRTC2 (probably when phosphorylated at 'Ser-171'). Interacts with CRTC3 (probably when phosphorylated at 'Ser-162' and/or 'Ser-273'). Interacts with ATP2B1 and ATP2B3; this interaction inhibits calcium-transporting ATPase activity. Interacts with MEFV. Interacts with RNF115. Interacts with GPR15; this interaction promotes ER-to-Golgi transport of GPR15.

Its subcellular location is the nucleus. It localises to the cytoplasm. The protein localises to the melanosome. Adapter protein implicated in the regulation of a large spectrum of both general and specialized signaling pathways. Binds to a large number of partners, usually by recognition of a phosphoserine or phosphothreonine motif. Binding generally results in the modulation of the activity of the binding partner. Positively regulates phosphorylated protein HSF1 nuclear export to the cytoplasm. In Rattus norvegicus (Rat), this protein is 14-3-3 protein epsilon (Ywhae).